Consider the following 144-residue polypeptide: Gas vesicle protein I1 (144 aa).

Residues 1–144 (MSDKQQQKHK…SPTEDEVNDE (144 aa)) form a disordered region. Basic residues-rich tracts occupy residues 7–17 (QKHKQKARQAR) and 26–46 (KARRNLLRQREKLARRRTRNR). The span at 75–94 (MPPQKSNAENAVRNSHSTVP) shows a compositional bias: polar residues. Residues 122–136 (SEASAPSDESASGSP) are compositionally biased toward low complexity.

Belongs to the gas vesicle GvpI family. GvpF to GvpM interact with each other in vitro, and may form multi-subunit complex(es). Interacts with GvpC1 and GvpO.

It localises to the gas vesicle. Proteins GvpF to GvpM might be involved in nucleating gas vesicle formation. A minor component of the gas vesicle. Gas vesicles are hollow, gas filled proteinaceous nanostructures found in several microbial planktonic microorganisms. They allow positioning of halobacteria at the optimal depth for growth in the poorly aerated, shallow brine pools of their habitat. In terms of biological role, expression of a 9.5 kb p-vac DNA fragment containing 2 divergently transcribed regions (gvpD-gvpE-gvpF-gvpG-gvpH-gvpI-gvpJ-gvpK-gvpL-gvpM and gvpA-gvpC-gvpN-gvpO) allows H.volcanii to produce gas vesicles. A similar region restores gas vesicle production in H.halobium without the p-vac locus, but it still has the c-vac locus. In Halobacterium salinarum (strain ATCC 700922 / JCM 11081 / NRC-1) (Halobacterium halobium), this protein is Gas vesicle protein I1 (gvpI11).